The following is a 1203-amino-acid chain: Potassium/sodium hyperpolarization-activated cyclic nucleotide-gated channel 4 (1203 aa).

The disordered stretch occupies residues 1–182 (MDKLPPSMRK…QPASASCEQP (182 aa)). Over 1–263 (MDKLPPSMRK…IIHPYSDFRF (263 aa)) the chain is Cytoplasmic. The span at 26-36 (MDEEEDAEEEG) shows a compositional bias: acidic residues. Gly residues predominate over residues 105 to 117 (SRGGGSGGTGSGS). Basic and acidic residues predominate over residues 121–133 (HLHDSAEERRLIA). A Phosphoserine modification is found at serine 138. Residues 163–174 (ASPPPPQQPPQP) are compositionally biased toward pro residues. The interval 209–260 (GQAGFMQRQFGAMLQPGVNKFSLRMFGSQKAVEREQERVKSAGFWIIHPYSD) is involved in subunit assembly. Residues 264–286 (YWDLTMLLLMVGNLIIIPVGITF) form a helical membrane-spanning segment. Residues 287–293 (FKDENTT) are Extracellular-facing. A helical transmembrane segment spans residues 294–314 (PWIVFNVVSDTFFLIDLVLNF). Over 315–336 (RTGIVVEDNTEIILDPQRIKMK) the chain is Cytoplasmic. A helical transmembrane segment spans residues 337–359 (YLKSWFMVDFISSIPVDYIFLIV). At 360 to 378 (ETRIDSEVYKTARALRIVR) the chain is on the extracellular side. A helical; Voltage-sensor membrane pass occupies residues 379–399 (FTKILSLLRLLRLSRLIRYIH). The Cytoplasmic segment spans residues 400 to 413 (QWEEIFHMTYDLAS). The helical transmembrane segment at 414–436 (AVVRIVNLIGMMLLLCHWDGCLQ) threads the bilayer. Over 437-464 (FLVPMLQDFPDDCWVSINNMVNNSWGKQ) the chain is Extracellular. A glycan (N-linked (GlcNAc...) asparagine) is linked at asparagine 458. Positions 465 to 486 (YSYALFKAMSHMLCIGYGRQAP) form an intramembrane region, pore-forming. At 487–491 (VGMSD) the chain is on the extracellular side. The helical transmembrane segment at 492–517 (VWLTMLSMIVGATCYAMFIGHATALI) threads the bilayer. Over 518–1203 (QSLDSSRRQY…PVRSKLPSNL (686 aa)) the chain is Cytoplasmic. 4 residues coordinate 3',5'-cyclic GMP: tyrosine 559, lysine 562, phenylalanine 564, and glutamate 566. Positions 659, 660, 662, 669, 670, 673, and 710 each coordinate 3',5'-cyclic AMP. Disordered stretches follow at residues 836-856 (ALGS…SSSS), 870-897 (GLSP…TPSA), and 918-1203 (LSSS…PSNL). Composition is skewed to low complexity over residues 918–941 (LSSS…AAQP) and 966–986 (RSPS…SLGL). Over residues 995-1004 (ETPPRQPEPP) the composition is skewed to pro residues. The span at 1005–1028 (SLVAGASGGASPVGFTPRGGLSPP) shows a compositional bias: low complexity. Over residues 1029–1042 (GHSPGPPRTFPSAP) the composition is skewed to pro residues. Residues 1045–1056 (ASGSHGSLLLPP) are compositionally biased toward low complexity. A phosphoserine mark is found at serine 1105 and serine 1108. Over residues 1122–1137 (AGGGSGGSGSSGGLGP) the composition is skewed to gly residues.

It belongs to the potassium channel HCN family. In terms of assembly, homotetramer. The channel assemble into homotetramers or heteromeric complexes that contains of four pore-forming subunits. Interacts with PEX5L with a 4:4 HCN4:PEX5L stoichiometry; reduces the effects of cAMP on the voltage-dependence and rate of activation. Interacts with IRAG1; regulates HCN4 channel activity. Interacts with IRAG2; regulates HCN4 channel activity. S-palmitoylated. In terms of tissue distribution, highly expressed in thalamus, testis and in heart, both in ventricle and atrium. Detected at much lower levels in amygdala, substantia nigra, cerebellum and hippocampus.

Its subcellular location is the cell membrane. It carries out the reaction K(+)(in) = K(+)(out). The catalysed reaction is Na(+)(in) = Na(+)(out). Its activity is regulated as follows. Activated by cAMP and to a lesser extent by cGMP and cCMP. cAMP binding causes a conformation change that leads to the assembly of an active tetramer and channel opening. Binding of cAMP removes a tonic inhibition conferred by cyclic nucleotide-binding domain (CNBD) on channel opening. Cyclic dinucleotides can modulate HCN4 channel; cyclic dinucleotides acting as potent antagonists of cAMP. Inhibited by extracellular Cs(+) ions. Auxiliary subunits can also regulate HCN4 channel. IRAG1 causes a gain-of-function by shifting HCN4 activation to more depolarized membrane potentials in the absence of cAMP. In contrast, IRAG2 causes a loss-of-function by inhibiting cAMP-dependent potentiation of HCN4 activation. Functionally, hyperpolarization-activated ion channel that are permeable to Na(+) and K(+) ions with very slow activation and inactivation. Exhibits higher selectivity for K(+) over Na(+) ions. Contributes to the native pacemaker currents in heart (If) that regulate the rhythm of heart beat. Contributes to the native pacemaker currents in neurons (Ih). May mediate responses to sour stimuli. This Homo sapiens (Human) protein is Potassium/sodium hyperpolarization-activated cyclic nucleotide-gated channel 4.